Reading from the N-terminus, the 196-residue chain is UMP-CMP kinase (196 aa).

Residue 13–18 participates in ATP binding; it reads GAGKGT. Ser-33 is modified (phosphoserine). The segment at 33 to 63 is NMP; the sequence is SAGELLRDERKNPDSQYGELIEKYIKEGKIV. Residue Arg-39 coordinates a ribonucleoside 5'-phosphate. 2 positions are modified to N6-acetyllysine: Lys-43 and Lys-55. 61 to 63 provides a ligand contact to a ribonucleoside 5'-phosphate; it reads KIV. A Glycyl lysine isopeptide (Lys-Gly) (interchain with G-Cter in SUMO2) cross-link involves residue Lys-73. 93–96 provides a ligand contact to a ribonucleoside 5'-phosphate; the sequence is GFPR. Residue Asn-100 coordinates CMP. Lys-106 is modified (N6-succinyllysine). The interval 133-143 is LID; sequence ERGKSSGRSDD. Arg-134 provides a ligand contact to ATP. A ribonucleoside 5'-phosphate contacts are provided by Arg-140 and Arg-151. Lys-179 contributes to the ATP binding site. Ser-180 bears the Phosphoserine mark.

It belongs to the adenylate kinase family. UMP-CMP kinase subfamily. As to quaternary structure, monomer. The cofactor is Mg(2+).

Its subcellular location is the nucleus. The protein localises to the cytoplasm. It carries out the reaction CMP + ATP = CDP + ADP. It catalyses the reaction dCMP + ATP = dCDP + ADP. The catalysed reaction is UMP + ATP = UDP + ADP. The enzyme catalyses a 2'-deoxyribonucleoside 5'-diphosphate + ATP = a 2'-deoxyribonucleoside 5'-triphosphate + ADP. It carries out the reaction a ribonucleoside 5'-diphosphate + ATP = a ribonucleoside 5'-triphosphate + ADP. In terms of biological role, catalyzes the phosphorylation of pyrimidine nucleoside monophosphates at the expense of ATP. Plays an important role in de novo pyrimidine nucleotide biosynthesis. Has preference for UMP and CMP as phosphate acceptors. Also displays broad nucleoside diphosphate kinase activity. The protein is UMP-CMP kinase (Cmpk1) of Mus musculus (Mouse).